A 520-amino-acid polypeptide reads, in one-letter code: Probable cytosol aminopeptidase (520 aa).

Mn(2+)-binding residues include K232 and D237. K244 is a catalytic residue. Mn(2+) contacts are provided by D255, D314, and E316. The active site involves R318. The segment at 488–520 (KAKKSTAKKATTKKTTTRKTASKTKSTKSKARK) is disordered.

The protein belongs to the peptidase M17 family. The cofactor is Mn(2+).

The protein resides in the cytoplasm. It catalyses the reaction Release of an N-terminal amino acid, Xaa-|-Yaa-, in which Xaa is preferably Leu, but may be other amino acids including Pro although not Arg or Lys, and Yaa may be Pro. Amino acid amides and methyl esters are also readily hydrolyzed, but rates on arylamides are exceedingly low.. The catalysed reaction is Release of an N-terminal amino acid, preferentially leucine, but not glutamic or aspartic acids.. Presumably involved in the processing and regular turnover of intracellular proteins. Catalyzes the removal of unsubstituted N-terminal amino acids from various peptides. This is Probable cytosol aminopeptidase (pepA) from Metamycoplasma salivarium (Mycoplasma salivarium).